The chain runs to 268 residues: AB hydrolase superfamily protein YisY (268 aa).

Residues 23–254 (PIIFLHGWPL…NSGHGAFYEE (232 aa)) form the AB hydrolase-1 domain. Catalysis depends on residues Ser96, Asp220, and His248.

It belongs to the AB hydrolase superfamily.

The protein is AB hydrolase superfamily protein YisY (yisY) of Bacillus subtilis (strain 168).